We begin with the raw amino-acid sequence, 333 residues long: Holliday junction branch migration complex subunit RuvB (333 aa).

The large ATPase domain (RuvB-L) stretch occupies residues 1-182 (MTNRILDMEQ…FGITGHMEYY (182 aa)). ATP is bound by residues leucine 21, arginine 22, glycine 63, lysine 66, threonine 67, threonine 68, 129-131 (EDF), arginine 172, tyrosine 182, and arginine 219. Mg(2+) is bound at residue threonine 67. The tract at residues 183–253 (ELADLTEIVE…ITDKALTMLD (71 aa)) is small ATPAse domain (RuvB-S). The interval 256–333 (REGLDYVDQK…EHLGYPYTEK (78 aa)) is head domain (RuvB-H). DNA-binding residues include arginine 292, arginine 311, arginine 313, and arginine 316.

The protein belongs to the RuvB family. Homohexamer. Forms an RuvA(8)-RuvB(12)-Holliday junction (HJ) complex. HJ DNA is sandwiched between 2 RuvA tetramers; dsDNA enters through RuvA and exits via RuvB. An RuvB hexamer assembles on each DNA strand where it exits the tetramer. Each RuvB hexamer is contacted by two RuvA subunits (via domain III) on 2 adjacent RuvB subunits; this complex drives branch migration. In the full resolvosome a probable DNA-RuvA(4)-RuvB(12)-RuvC(2) complex forms which resolves the HJ.

The protein localises to the cytoplasm. It carries out the reaction ATP + H2O = ADP + phosphate + H(+). Its function is as follows. The RuvA-RuvB-RuvC complex processes Holliday junction (HJ) DNA during genetic recombination and DNA repair, while the RuvA-RuvB complex plays an important role in the rescue of blocked DNA replication forks via replication fork reversal (RFR). RuvA specifically binds to HJ cruciform DNA, conferring on it an open structure. The RuvB hexamer acts as an ATP-dependent pump, pulling dsDNA into and through the RuvAB complex. RuvB forms 2 homohexamers on either side of HJ DNA bound by 1 or 2 RuvA tetramers; 4 subunits per hexamer contact DNA at a time. Coordinated motions by a converter formed by DNA-disengaged RuvB subunits stimulates ATP hydrolysis and nucleotide exchange. Immobilization of the converter enables RuvB to convert the ATP-contained energy into a lever motion, pulling 2 nucleotides of DNA out of the RuvA tetramer per ATP hydrolyzed, thus driving DNA branch migration. The RuvB motors rotate together with the DNA substrate, which together with the progressing nucleotide cycle form the mechanistic basis for DNA recombination by continuous HJ branch migration. Branch migration allows RuvC to scan DNA until it finds its consensus sequence, where it cleaves and resolves cruciform DNA. The protein is Holliday junction branch migration complex subunit RuvB of Streptococcus suis (strain 98HAH33).